The primary structure comprises 264 residues: Glutamate 5-kinase (264 aa).

Position 9 (lysine 9) interacts with ATP. 3 residues coordinate substrate: serine 47, aspartate 132, and asparagine 144. Residues 164-165 (SD) and 206-212 (TGGIVTK) contribute to the ATP site.

It belongs to the glutamate 5-kinase family.

The protein localises to the cytoplasm. It carries out the reaction L-glutamate + ATP = L-glutamyl 5-phosphate + ADP. The protein operates within amino-acid biosynthesis; L-proline biosynthesis; L-glutamate 5-semialdehyde from L-glutamate: step 1/2. In terms of biological role, catalyzes the transfer of a phosphate group to glutamate to form L-glutamate 5-phosphate. In Helicobacter hepaticus (strain ATCC 51449 / 3B1), this protein is Glutamate 5-kinase.